We begin with the raw amino-acid sequence, 286 residues long: Ribosomal RNA small subunit methyltransferase A (286 aa).

The S-adenosyl-L-methionine site is built by His-11, Leu-13, Gly-44, Glu-65, Asp-90, and Asn-115.

This sequence belongs to the class I-like SAM-binding methyltransferase superfamily. rRNA adenine N(6)-methyltransferase family. RsmA subfamily.

The protein resides in the cytoplasm. The catalysed reaction is adenosine(1518)/adenosine(1519) in 16S rRNA + 4 S-adenosyl-L-methionine = N(6)-dimethyladenosine(1518)/N(6)-dimethyladenosine(1519) in 16S rRNA + 4 S-adenosyl-L-homocysteine + 4 H(+). Specifically dimethylates two adjacent adenosines (A1518 and A1519) in the loop of a conserved hairpin near the 3'-end of 16S rRNA in the 30S particle. May play a critical role in biogenesis of 30S subunits. In Nostoc punctiforme (strain ATCC 29133 / PCC 73102), this protein is Ribosomal RNA small subunit methyltransferase A.